A 550-amino-acid chain; its full sequence is Arginine--tRNA ligase (550 aa).

The 'HIGH' region signature appears at 130–140 (ANPTGPIHIGG).

This sequence belongs to the class-I aminoacyl-tRNA synthetase family. As to quaternary structure, monomer.

It localises to the cytoplasm. The enzyme catalyses tRNA(Arg) + L-arginine + ATP = L-arginyl-tRNA(Arg) + AMP + diphosphate. The sequence is that of Arginine--tRNA ligase (argS) from Mycolicibacterium smegmatis (strain ATCC 700084 / mc(2)155) (Mycobacterium smegmatis).